A 180-amino-acid polypeptide reads, in one-letter code: Large ribosomal subunit protein uL5 (180 aa).

This sequence belongs to the universal ribosomal protein uL5 family. As to quaternary structure, part of the 50S ribosomal subunit; part of the 5S rRNA/L5/L18/L25 subcomplex. Contacts the 5S rRNA and the P site tRNA. Forms a bridge to the 30S subunit in the 70S ribosome.

This is one of the proteins that bind and probably mediate the attachment of the 5S RNA into the large ribosomal subunit, where it forms part of the central protuberance. In the 70S ribosome it contacts protein S13 of the 30S subunit (bridge B1b), connecting the 2 subunits; this bridge is implicated in subunit movement. Contacts the P site tRNA; the 5S rRNA and some of its associated proteins might help stabilize positioning of ribosome-bound tRNAs. The polypeptide is Large ribosomal subunit protein uL5 (Rubrobacter xylanophilus (strain DSM 9941 / JCM 11954 / NBRC 16129 / PRD-1)).